The following is a 273-amino-acid chain: Petrobactin import ATP-binding protein FpuD (273 aa).

The region spanning 5–241 is the ABC transporter domain; that stretch reads LETKRLTLSY…KLVRDVFRME (237 aa). Position 37 to 44 (37 to 44) interacts with ATP; sequence GSNGCGKS.

This sequence belongs to the ABC transporter superfamily. In terms of assembly, the complex is composed of two ATP-binding proteins (FpuD), two transmembrane proteins (FpuB) and a solute-binding protein (FpuA).

The protein resides in the cell membrane. The enzyme catalyses a Fe(III)-siderophore(out) + ATP + H2O = a Fe(III)-siderophore(in) + ADP + phosphate + H(+). In terms of biological role, part of an ABC transporter complex involved in ferric-petrobactin uptake. Probably responsible for energy coupling to the transport system. The chain is Petrobactin import ATP-binding protein FpuD from Bacillus anthracis.